We begin with the raw amino-acid sequence, 602 residues long: Multidrug and toxin extrusion protein 2 (602 aa).

Topologically, residues methionine 1–threonine 33 are cytoplasmic. A helical membrane pass occupies residues leucine 34 to valine 54. At serine 55 to glutamate 66 the chain is on the extracellular side. The chain crosses the membrane as a helical span at residues leucine 67–glycine 87. The Cytoplasmic portion of the chain corresponds to leucine 88 to leucine 119. A helical membrane pass occupies residues leucine 120 to phenylalanine 140. Residues arginine 141 to tyrosine 153 are Extracellular-facing. Residues valine 154–leucine 174 form a helical membrane-spanning segment. The Cytoplasmic portion of the chain corresponds to glutamine 175–glutamine 219. Residues valine 220–valine 240 traverse the membrane as a helical segment. The Extracellular portion of the chain corresponds to leucine 241–serine 248. Residues alanine 249–leucine 269 traverse the membrane as a helical segment. The Cytoplasmic segment spans residues lysine 270–glycine 289. The helical transmembrane segment at proline 290–tyrosine 309 threads the bilayer. Over glutamate 310–glutamine 327 the chain is Extracellular. The chain crosses the membrane as a helical span at residues alanine 328 to valine 348. Over cysteine 349–alanine 368 the chain is Cytoplasmic. A helical membrane pass occupies residues valine 369–leucine 389. Over lysine 390–aspartate 402 the chain is Extracellular. The helical transmembrane segment at valine 403–isoleucine 423 threads the bilayer. The Cytoplasmic portion of the chain corresponds to cysteine 424–alanine 442. The helical transmembrane segment at valine 443–valine 463 threads the bilayer. The Extracellular segment spans residues arginine 464 to arginine 466. Residues isoleucine 467–alanine 487 traverse the membrane as a helical segment. At tyrosine 488–arginine 578 the chain is on the cytoplasmic side. The tract at residues lysine 503–serine 529 is disordered. The span at arginine 507 to threonine 518 shows a compositional bias: polar residues. The chain crosses the membrane as a helical span at residues glycine 579–alanine 599. The Extracellular segment spans residues threonine 600 to histidine 602.

Belongs to the multi antimicrobial extrusion (MATE) (TC 2.A.66.1) family. As to expression, high expression in kidney. Very small expression in adrenal gland and lung. In terms of tissue distribution, high expression in kidney. Very small expression in brain and testis. Ubiquitously expressed in all tissues examined except the kidney.

The protein resides in the cell membrane. It localises to the apical cell membrane. The catalysed reaction is thiamine(out) + H(+)(in) = thiamine(in) + H(+)(out). It carries out the reaction estrone 3-sulfate(in) + H(+)(out) = estrone 3-sulfate(out) + H(+)(in). The enzyme catalyses creatinine(in) + H(+)(out) = creatinine(out) + H(+)(in). Its function is as follows. Multidrug efflux pump that functions as a H(+)/organic cation antiporter. Mediates the efflux of cationic compounds, such as the model cations, tetraethylammonium (TEA) and 1-methyl-4-phenylpyridinium (MPP+), the platinum-based drug oxaliplatin or weak bases that are positively charged at physiological pH, cimetidine, the platinum-based drugs cisplatin and oxaliplatin or the antidiabetic drug metformin. Mediates the efflux of endogenous compounds such as, creatinine, thiamine and estrone-3-sulfate. Plays a physiological role in the excretion of drugs, toxins and endogenous metabolites through the kidney. Non-functional protein. This chain is Multidrug and toxin extrusion protein 2, found in Homo sapiens (Human).